The chain runs to 437 residues: Ribosomal protein uS12 methylthiotransferase RimO (437 aa).

The MTTase N-terminal domain maps to 5-116 (PTISVSHLGC…IAEVIQRVET (112 aa)). [4Fe-4S] cluster contacts are provided by cysteine 14, cysteine 50, cysteine 79, cysteine 154, cysteine 158, and cysteine 161. Residues 140–369 (TTNEAVAYLR…MEIQQPIAAK (230 aa)) form the Radical SAM core domain. The TRAM domain maps to 372–437 (QKCVGQTVEV…DVYDLYGKVI (66 aa)).

This sequence belongs to the methylthiotransferase family. RimO subfamily. Requires [4Fe-4S] cluster as cofactor.

Its subcellular location is the cytoplasm. The catalysed reaction is L-aspartate(89)-[ribosomal protein uS12]-hydrogen + (sulfur carrier)-SH + AH2 + 2 S-adenosyl-L-methionine = 3-methylsulfanyl-L-aspartate(89)-[ribosomal protein uS12]-hydrogen + (sulfur carrier)-H + 5'-deoxyadenosine + L-methionine + A + S-adenosyl-L-homocysteine + 2 H(+). Catalyzes the methylthiolation of an aspartic acid residue of ribosomal protein uS12. This Crocosphaera subtropica (strain ATCC 51142 / BH68) (Cyanothece sp. (strain ATCC 51142)) protein is Ribosomal protein uS12 methylthiotransferase RimO.